A 357-amino-acid chain; its full sequence is O-methyltransferase 9 (357 aa).

The S-adenosyl-L-methionine site is built by Gly-200, Asp-224, Asn-249, Phe-250, and Lys-263. The active-site Proton acceptor is the His-267.

Belongs to the class I-like SAM-binding methyltransferase superfamily. Cation-independent O-methyltransferase family. COMT subfamily.

The catalysed reaction is (3,5-dichloro-2,4,6-trihydroxyphenyl)hexan-1-one + S-adenosyl-L-methionine = 1-(3,5-dichloro-2,6-dihydroxy-4-methoxyphenyl)hexan-1-one + S-adenosyl-L-homocysteine + H(+). The protein is O-methyltransferase 9 (omt9) of Dictyostelium discoideum (Social amoeba).